A 300-amino-acid polypeptide reads, in one-letter code: ATP-dependent (S)-NAD(P)H-hydrate dehydratase (300 aa).

In terms of domain architecture, YjeF C-terminal spans 14 to 293; the sequence is LLALFKTVVP…NQIPSVFQTE (280 aa). (6S)-NADPHX contacts are provided by residues G114 and 167 to 173; that span reads NVMEFQR. ATP contacts are provided by residues 198 to 202 and 219 to 228; these read KGAND and GSGRRCGGQG. (6S)-NADPHX is bound at residue D229.

Belongs to the NnrD/CARKD family. Mg(2+) serves as cofactor.

It catalyses the reaction (6S)-NADHX + ATP = ADP + phosphate + NADH + H(+). The catalysed reaction is (6S)-NADPHX + ATP = ADP + phosphate + NADPH + H(+). Catalyzes the dehydration of the S-form of NAD(P)HX at the expense of ATP, which is converted to ADP. Together with NAD(P)HX epimerase, which catalyzes the epimerization of the S- and R-forms, the enzyme allows the repair of both epimers of NAD(P)HX, a damaged form of NAD(P)H that is a result of enzymatic or heat-dependent hydration. The chain is ATP-dependent (S)-NAD(P)H-hydrate dehydratase from Drosophila melanogaster (Fruit fly).